A 189-amino-acid chain; its full sequence is uncharacterized protein (189 aa).

The segment covering 105-115 has biased composition (basic and acidic residues); the sequence is EKLEKEEESKT. The interval 105 to 189 is disordered; that stretch reads EKLEKEEESK…TDDEKTEVST (85 aa). Positions 116 to 136 are enriched in basic residues; that stretch reads AKKRAKRLRQKAAAKKRKLTK. Acidic residues predominate over residues 141–151; that stretch reads SDESSSDDSDS. The segment covering 161-177 has biased composition (basic and acidic residues); the sequence is SEGKQNTEVEDKDKVEK. A compositionally biased stretch (acidic residues) spans 178–189; the sequence is EETDDEKTEVST.

This is an uncharacterized protein from Caenorhabditis elegans.